Here is a 196-residue protein sequence, read N- to C-terminus: ATP-dependent Clp protease proteolytic subunit (196 aa).

The Nucleophile role is filled by serine 101. The active site involves histidine 126.

It belongs to the peptidase S14 family. As to quaternary structure, component of the chloroplastic Clp protease core complex.

Its subcellular location is the plastid. It is found in the chloroplast stroma. The catalysed reaction is Hydrolysis of proteins to small peptides in the presence of ATP and magnesium. alpha-casein is the usual test substrate. In the absence of ATP, only oligopeptides shorter than five residues are hydrolyzed (such as succinyl-Leu-Tyr-|-NHMec, and Leu-Tyr-Leu-|-Tyr-Trp, in which cleavage of the -Tyr-|-Leu- and -Tyr-|-Trp bonds also occurs).. In terms of biological role, cleaves peptides in various proteins in a process that requires ATP hydrolysis. Has a chymotrypsin-like activity. Plays a major role in the degradation of misfolded proteins. The sequence is that of ATP-dependent Clp protease proteolytic subunit from Barbarea verna (Land cress).